Here is a 427-residue protein sequence, read N- to C-terminus: Inorganic pyrophosphatase 1 (427 aa).

Positions 36-52 are enriched in low complexity; the sequence is SSSSNTATTSTSSSNTS. 2 disordered regions span residues 36-63 and 77-118; these read SSSS…TSRP and SMDS…RSLH. Composition is skewed to polar residues over residues 53 to 63 and 77 to 114; these read QKWATSRTSRP and SMDS…ANSE. Asp259, Asp264, and Asp296 together coordinate Mg(2+).

The protein belongs to the PPase family. It depends on Mg(2+) as a cofactor. As to expression, expressed in coelomocytes, the intestine and in the nervous system including the nerve cords and sensory neurons.

The protein resides in the cytoplasm. The catalysed reaction is diphosphate + H2O = 2 phosphate + H(+). In terms of biological role, catalyzes the hydrolysis of inorganic pyrophosphate (PPi) forming two phosphate ions. Plays a role in intestinal development and subsequent normal secretory, digestive and absorption functions. Required for larval development. The polypeptide is Inorganic pyrophosphatase 1 (Caenorhabditis elegans).